Reading from the N-terminus, the 71-residue chain is uncharacterized protein (71 aa).

The protein localises to the plastid. Its subcellular location is the chloroplast. This is an uncharacterized protein from Mesostigma viride (Green alga).